The sequence spans 345 residues: Phosphoribosylformylglycinamidine cyclo-ligase (345 aa).

Belongs to the AIR synthase family.

It localises to the cytoplasm. It catalyses the reaction 2-formamido-N(1)-(5-O-phospho-beta-D-ribosyl)acetamidine + ATP = 5-amino-1-(5-phospho-beta-D-ribosyl)imidazole + ADP + phosphate + H(+). It participates in purine metabolism; IMP biosynthesis via de novo pathway; 5-amino-1-(5-phospho-D-ribosyl)imidazole from N(2)-formyl-N(1)-(5-phospho-D-ribosyl)glycinamide: step 2/2. In Synechococcus sp. (strain CC9605), this protein is Phosphoribosylformylglycinamidine cyclo-ligase.